A 173-amino-acid polypeptide reads, in one-letter code: Crossover junction endodeoxyribonuclease RuvC (173 aa).

Active-site residues include D8, E67, and D139. D8, E67, and D139 together coordinate Mg(2+).

Belongs to the RuvC family. As to quaternary structure, homodimer which binds Holliday junction (HJ) DNA. The HJ becomes 2-fold symmetrical on binding to RuvC with unstacked arms; it has a different conformation from HJ DNA in complex with RuvA. In the full resolvosome a probable DNA-RuvA(4)-RuvB(12)-RuvC(2) complex forms which resolves the HJ. Mg(2+) is required as a cofactor.

The protein resides in the cytoplasm. The catalysed reaction is Endonucleolytic cleavage at a junction such as a reciprocal single-stranded crossover between two homologous DNA duplexes (Holliday junction).. Its function is as follows. The RuvA-RuvB-RuvC complex processes Holliday junction (HJ) DNA during genetic recombination and DNA repair. Endonuclease that resolves HJ intermediates. Cleaves cruciform DNA by making single-stranded nicks across the HJ at symmetrical positions within the homologous arms, yielding a 5'-phosphate and a 3'-hydroxyl group; requires a central core of homology in the junction. The consensus cleavage sequence is 5'-(A/T)TT(C/G)-3'. Cleavage occurs on the 3'-side of the TT dinucleotide at the point of strand exchange. HJ branch migration catalyzed by RuvA-RuvB allows RuvC to scan DNA until it finds its consensus sequence, where it cleaves and resolves the cruciform DNA. This is Crossover junction endodeoxyribonuclease RuvC from Salmonella paratyphi C (strain RKS4594).